The chain runs to 463 residues: A-type ATP synthase subunit B (463 aa).

Belongs to the ATPase alpha/beta chains family. Has multiple subunits with at least A(3), B(3), C, D, E, F, H, I and proteolipid K(x).

Its subcellular location is the cell membrane. Its function is as follows. Component of the A-type ATP synthase that produces ATP from ADP in the presence of a proton gradient across the membrane. The B chain is a regulatory subunit. This chain is A-type ATP synthase subunit B, found in Methanothermobacter thermautotrophicus (strain ATCC 29096 / DSM 1053 / JCM 10044 / NBRC 100330 / Delta H) (Methanobacterium thermoautotrophicum).